Here is a 432-residue protein sequence, read N- to C-terminus: Adenylosuccinate synthetase (432 aa).

Residues 13 to 19 and 41 to 43 contribute to the GTP site; these read GDEGKGK and GHT. The Proton acceptor role is filled by Asp14. Residues Asp14 and Gly41 each contribute to the Mg(2+) site. IMP is bound by residues 14–17, 39–42, Thr130, Arg144, Gln225, Thr240, and Arg304; these read DEGK and NAGH. His42 functions as the Proton donor in the catalytic mechanism. 300–306 lines the substrate pocket; it reads ATTGRRR. GTP-binding positions include Arg306, 332-334, and 415-417; these read KLD and STG.

Belongs to the adenylosuccinate synthetase family. Homodimer. The cofactor is Mg(2+).

The protein localises to the cytoplasm. It carries out the reaction IMP + L-aspartate + GTP = N(6)-(1,2-dicarboxyethyl)-AMP + GDP + phosphate + 2 H(+). It functions in the pathway purine metabolism; AMP biosynthesis via de novo pathway; AMP from IMP: step 1/2. Plays an important role in the de novo pathway of purine nucleotide biosynthesis. Catalyzes the first committed step in the biosynthesis of AMP from IMP. This chain is Adenylosuccinate synthetase, found in Salmonella typhi.